The sequence spans 165 residues: Nucleoside-triphosphatase THEP1 (165 aa).

ATP contacts are provided by residues 7 to 14 and 93 to 100; these read GRPGVGKT and LVIIDEVG.

The protein belongs to the THEP1 NTPase family.

It carries out the reaction a ribonucleoside 5'-triphosphate + H2O = a ribonucleoside 5'-diphosphate + phosphate + H(+). In terms of biological role, has nucleotide phosphatase activity towards ATP, GTP, CTP, TTP and UTP. May hydrolyze nucleoside diphosphates with lower efficiency. This chain is Nucleoside-triphosphatase THEP1, found in Archaeoglobus fulgidus (strain ATCC 49558 / DSM 4304 / JCM 9628 / NBRC 100126 / VC-16).